The chain runs to 243 residues: Pyridoxine 5'-phosphate synthase (243 aa).

Asparagine 9 is a 3-amino-2-oxopropyl phosphate binding site. 11–12 lines the 1-deoxy-D-xylulose 5-phosphate pocket; sequence DH. Residue arginine 20 coordinates 3-amino-2-oxopropyl phosphate. Histidine 45 acts as the Proton acceptor in catalysis. 1-deoxy-D-xylulose 5-phosphate contacts are provided by arginine 47 and histidine 52. Glutamate 72 functions as the Proton acceptor in the catalytic mechanism. Threonine 102 lines the 1-deoxy-D-xylulose 5-phosphate pocket. The active-site Proton donor is the histidine 193. 3-amino-2-oxopropyl phosphate-binding positions include glycine 194 and 215–216; that span reads GH.

Belongs to the PNP synthase family. As to quaternary structure, homooctamer; tetramer of dimers.

It localises to the cytoplasm. The enzyme catalyses 3-amino-2-oxopropyl phosphate + 1-deoxy-D-xylulose 5-phosphate = pyridoxine 5'-phosphate + phosphate + 2 H2O + H(+). The protein operates within cofactor biosynthesis; pyridoxine 5'-phosphate biosynthesis; pyridoxine 5'-phosphate from D-erythrose 4-phosphate: step 5/5. In terms of biological role, catalyzes the complicated ring closure reaction between the two acyclic compounds 1-deoxy-D-xylulose-5-phosphate (DXP) and 3-amino-2-oxopropyl phosphate (1-amino-acetone-3-phosphate or AAP) to form pyridoxine 5'-phosphate (PNP) and inorganic phosphate. The chain is Pyridoxine 5'-phosphate synthase from Escherichia coli O6:H1 (strain CFT073 / ATCC 700928 / UPEC).